Reading from the N-terminus, the 880-residue chain is Kinesin heavy chain (880 aa).

The Kinesin motor domain occupies S4–I327. ATP is bound by residues G85–S92 and G235–T242. The disordered stretch occupies residues V388 to I426. The span at P399–A408 shows a compositional bias: polar residues. A coiled-coil region spans residues I428–R849.

This sequence belongs to the TRAFAC class myosin-kinesin ATPase superfamily. Kinesin family. Kinesin subfamily.

Its subcellular location is the cytoplasm. It is found in the cytoskeleton. Its function is as follows. Kinesin is a microtubule-associated force-producing protein that may play a role in organelle transport. Its motor activity is directed toward the microtubule's plus end. The sequence is that of Kinesin heavy chain (klp1) from Botryotinia fuckeliana (Noble rot fungus).